The sequence spans 62 residues: Large ribosomal subunit protein bL28 (62 aa).

The protein belongs to the bacterial ribosomal protein bL28 family.

The polypeptide is Large ribosomal subunit protein bL28 (Streptococcus gordonii (strain Challis / ATCC 35105 / BCRC 15272 / CH1 / DL1 / V288)).